The sequence spans 292 residues: Elongation factor Ts (292 aa).

The segment at 80–83 is involved in Mg(2+) ion dislocation from EF-Tu; sequence TDFV.

This sequence belongs to the EF-Ts family.

It is found in the cytoplasm. Associates with the EF-Tu.GDP complex and induces the exchange of GDP to GTP. It remains bound to the aminoacyl-tRNA.EF-Tu.GTP complex up to the GTP hydrolysis stage on the ribosome. In Psychrobacter sp. (strain PRwf-1), this protein is Elongation factor Ts.